Here is a 104-residue protein sequence, read N- to C-terminus: Protamine-3 (104 aa).

Residues 1 to 104 (MGSRCAKLST…PSPEPKQKHS (104 aa)) are disordered. Residues 45 to 70 (EGEEEEEDEEDEEEEDDDEEDEEEEQ) show a composition bias toward acidic residues. A Phosphoserine modification is found at serine 96.

Belongs to the protamine P3 family. As to expression, testis.

It localises to the nucleus. It is found in the chromosome. Its function is as follows. Protamines substitute for histones in the chromatin of sperm during the haploid phase of spermatogenesis. They compact sperm DNA into a highly condensed, stable and inactive complex. The polypeptide is Protamine-3 (Prm3) (Rattus norvegicus (Rat)).